Here is a 229-residue protein sequence, read N- to C-terminus: Uracil-DNA glycosylase (229 aa).

The active-site Proton acceptor is the D67.

It belongs to the uracil-DNA glycosylase (UDG) superfamily. UNG family.

The protein resides in the cytoplasm. The enzyme catalyses Hydrolyzes single-stranded DNA or mismatched double-stranded DNA and polynucleotides, releasing free uracil.. Functionally, excises uracil residues from the DNA which can arise as a result of misincorporation of dUMP residues by DNA polymerase or due to deamination of cytosine. The protein is Uracil-DNA glycosylase of Coxiella burnetii (strain RSA 493 / Nine Mile phase I).